The sequence spans 513 residues: Probable tubulin polyglutamylase ttll-15 (513 aa).

The TTL domain maps to 73–411 (VTGSYESAHT…STPITKEADI (339 aa)). ATP is bound by residues 216–219 (QKFV), Lys-229, and Asp-231.

The protein belongs to the tubulin--tyrosine ligase family. In terms of tissue distribution, expressed in hypodermis and pharyngeal muscles.

Its function is as follows. Probable polyglutamylase that forms polyglutamate side chains on tubulin. Probably acts when complexed with other proteins. Appears to be dispensable for polar spindle formation in dividing embryonic cells, for cilia-dependent osmotic avoidance and for male mating behavior. Regulates microtubule dynamics in uterine muscle cells. The chain is Probable tubulin polyglutamylase ttll-15 from Caenorhabditis elegans.